We begin with the raw amino-acid sequence, 750 residues long: MIIRSPEPEVKILVDRDPIKTSFEEWAKPGHFSRTIAKGPDTTTWIWNLHADAHDFDSHTSDLEEISRKVFSAHFGQLSIIFLWLSGMYFHGARFSNYEAWLSDPTHIGPSAQVVWPIVGQEILNGDVGGGFRGIQITSGFFQIWRASGITSELQLYCTAIGALVFAALMLFAGWFHYHKAAPKLAWFQDVESMLNHHLAGLLGLGSLSWAGHQVHVSLPINQFLNAGVDPKEIPLPHEFILNRDLLAQLYPSFAEGATPFFTLNWSKYSEFLTFRGGLDPVTGGLWLTDIAHHHLAIAILFLIAGHMYRTNWGIGHGIKDILEAHKGPFTGQGHKGLYEILTTSWHAQLSLNLAMLGSLTIIVAHHMYSMPPYPYLATDYATQLSLFTHHMWIGGFLIVGAAAHAAIFMVRDYDPTNRYNDLLDRVLRHRDAIISHLNWVCIFLGFHSFGLYIHNDTMSALGRPQDMFSDTAIQLQPVFAQWIQNTHALAPGVTAPGETASTSLTWGGGELVAVGGKVALLPIPLGTADFLVHHIHAFTIHVTVLILLKGVLFARSSRLIPDKANLGFRFPCDGPGRGGTCQVSAWDHVFLGLFWMYNAISVVIFHFSWKMQSDVWGSISDQGVVTHITGGNFAQSSITINGWLRDFLWAQASQVIQSYGSSLSAYGLFFLGAHFVWAFSLMFLFSGRGYWQELIESIVWAHNKLKVAPATQPRALSIVQGRAVGVTHYLLGGIATTWAFFLARIIAVG.

Helical transmembrane passes span 70–93, 156–179, 195–219, 291–309, 346–369, 385–411, 433–455, and 531–549; these read VFSA…FHGA, LYCT…FHYH, LNHH…HVSL, IAHH…GHMY, WHAQ…HHMY, LSLF…IFMV, AIIS…LYIH, and FLVH…LILL. Residues cysteine 573 and cysteine 582 each contribute to the [4Fe-4S] cluster site. The next 2 helical transmembrane spans lie at 589 to 610 and 664 to 686; these read HVFL…HFSW and LSAY…MFLF. Chlorophyll a' is bound at residue histidine 675. Methionine 683 and tyrosine 691 together coordinate chlorophyll a. Residue tryptophan 692 coordinates phylloquinone. A helical transmembrane segment spans residues 724 to 744; the sequence is AVGVTHYLLGGIATTWAFFLA.

The protein belongs to the PsaA/PsaB family. In terms of assembly, the PsaA/B heterodimer binds the P700 chlorophyll special pair and subsequent electron acceptors. PSI consists of a core antenna complex that captures photons, and an electron transfer chain that converts photonic excitation into a charge separation. The eukaryotic PSI reaction center is composed of at least 11 subunits. P700 is a chlorophyll a/chlorophyll a' dimer, A0 is one or more chlorophyll a, A1 is one or both phylloquinones and FX is a shared 4Fe-4S iron-sulfur center. serves as cofactor.

The protein resides in the plastid. The protein localises to the chloroplast thylakoid membrane. It catalyses the reaction reduced [plastocyanin] + hnu + oxidized [2Fe-2S]-[ferredoxin] = oxidized [plastocyanin] + reduced [2Fe-2S]-[ferredoxin]. PsaA and PsaB bind P700, the primary electron donor of photosystem I (PSI), as well as the electron acceptors A0, A1 and FX. PSI is a plastocyanin-ferredoxin oxidoreductase, converting photonic excitation into a charge separation, which transfers an electron from the donor P700 chlorophyll pair to the spectroscopically characterized acceptors A0, A1, FX, FA and FB in turn. Oxidized P700 is reduced on the lumenal side of the thylakoid membrane by plastocyanin. The sequence is that of Photosystem I P700 chlorophyll a apoprotein A1 from Olimarabidopsis pumila (Dwarf rocket).